Consider the following 169-residue polypeptide: Putative antitoxin Rv0268c (169 aa).

Residues 1 to 11 show a composition bias toward basic residues; the sequence is MGTRSKSRTRQ. The segment at 1 to 35 is disordered; the sequence is MGTRSKSRTRQLKQSNGCTATTSGASDRRRRARRR. Positions 120-153 form a coiled coil; that stretch reads AAILISAERYESLMEELEDLRDRLSVHEREHVTM.

Belongs to the phD/YefM antitoxin family.

Putative antitoxin component of a type II toxin-antitoxin (TA) system; however the expected toxin coding sequence is not found adjacent to this gene. In Mycobacterium tuberculosis (strain ATCC 25618 / H37Rv), this protein is Putative antitoxin Rv0268c.